The primary structure comprises 277 residues: Urease accessory protein UreD (277 aa).

Belongs to the UreD family. As to quaternary structure, ureD, UreF and UreG form a complex that acts as a GTP-hydrolysis-dependent molecular chaperone, activating the urease apoprotein by helping to assemble the nickel containing metallocenter of UreC. The UreE protein probably delivers the nickel.

The protein resides in the cytoplasm. Required for maturation of urease via the functional incorporation of the urease nickel metallocenter. This chain is Urease accessory protein UreD, found in Pseudomonas entomophila (strain L48).